The primary structure comprises 503 residues: Opine oxidase subunit A (503 aa).

To T-protein and to dimethylglycine dehydrogenase. In terms of assembly, heterodimer of a subunit A and a subunit B.

It participates in opine metabolism; octopine degradation. Functionally, oxidative cleavage of octopine into L-arginine and pyruvate. The sequence is that of Opine oxidase subunit A (ooxA) from Agrobacterium tumefaciens (strain Ach5).